A 660-amino-acid chain; its full sequence is Acetyl-coenzyme A synthetase (660 aa).

CoA-binding positions include Arg-197–Lys-200 and Thr-317. ATP is bound by residues Gly-397–Pro-399, Asp-421–Thr-426, Asp-512, and Arg-528. Ser-536 contributes to the CoA binding site. Residue Arg-539 coordinates ATP. Residues Val-550 and Val-555 each coordinate Mg(2+). Lys-625 carries the N6-acetyllysine modification.

This sequence belongs to the ATP-dependent AMP-binding enzyme family. The cofactor is Mg(2+). Post-translationally, acetylated. Deacetylation by the SIR2-homolog deacetylase activates the enzyme.

The enzyme catalyses acetate + ATP + CoA = acetyl-CoA + AMP + diphosphate. The protein operates within ketone degradation; acetoin degradation. Its function is as follows. Catalyzes the conversion of acetate into acetyl-CoA (AcCoA), an essential intermediate at the junction of anabolic and catabolic pathways. AcsA undergoes a two-step reaction. In the first half reaction, AcsA combines acetate with ATP to form acetyl-adenylate (AcAMP) intermediate. In the second half reaction, it can then transfer the acetyl group from AcAMP to the sulfhydryl group of CoA, forming the product AcCoA. Although acetate is the preferred substrate of AcsA, propionate is also used, but at a diminished rate compared with that of acetate. Fatty acids with more than three carbon atoms are usually not accepted as substrates by AcsA. The chain is Acetyl-coenzyme A synthetase from Cupriavidus necator (strain ATCC 17699 / DSM 428 / KCTC 22496 / NCIMB 10442 / H16 / Stanier 337) (Ralstonia eutropha).